Reading from the N-terminus, the 2090-residue chain is Nuclear pore complex protein Nup205 (2090 aa).

Belongs to the NUP186/NUP192/NUP205 family. As to quaternary structure, part of the nuclear pore complex (NPC).

It is found in the nucleus. The protein resides in the nuclear pore complex. Plays a role in the nuclear pore complex (NPC) assembly and maintenance, but with limited role in NPC permeability. Required for specific nuclear import pathways such as Mad import. In Drosophila melanogaster (Fruit fly), this protein is Nuclear pore complex protein Nup205.